The sequence spans 372 residues: Lysophosphatidic acid receptor 5 (372 aa).

The Extracellular portion of the chain corresponds to 1 to 30 (MFANSSANTTSTNSSVLQCPDYRDTHRLHM). 3 N-linked (GlcNAc...) asparagine glycosylation sites follow: asparagine 4, asparagine 8, and asparagine 13. A helical transmembrane segment spans residues 31–51 (VVYSLVLATGLPLNALALWVF). At 52-59 (LRVLRVHS) the chain is on the cytoplasmic side. The chain crosses the membrane as a helical span at residues 60 to 80 (VVSVYMCNLAASDLLFTLSLP). Residues 81-100 (LRLSYYAQHHWPFPGFLCQT) lie on the Extracellular side of the membrane. A disulfide bond links cysteine 98 and cysteine 179. Residues 101 to 121 (SGAIFQMNMYGSCLFLMLINV) traverse the membrane as a helical segment. At 122-140 (DRYAAIVHPLRLRHLRRPR) the chain is on the cytoplasmic side. The chain crosses the membrane as a helical span at residues 141-161 (VARRLCLGVWALILLFAVPAA). The Extracellular portion of the chain corresponds to 162–191 (RVHSPSHCTYKNITVRLCFESFSDELWKGR). An N-linked (GlcNAc...) asparagine glycan is attached at asparagine 173. A helical transmembrane segment spans residues 192–212 (LLPLLLLAEILGFLLPLAAVV). The Cytoplasmic segment spans residues 213 to 243 (YSSGRVFWTLARPDATQSQRRRKTVRLLLAN). A helical transmembrane segment spans residues 244 to 264 (LIIFLLCFVPYNSTLAVYGLL). Over 265–280 (RANLVKNSIQDRDQVR) the chain is Extracellular. A helical transmembrane segment spans residues 281-301 (GVLMIMVLLAGANCVLDPLVY). Over 302 to 372 (YFSAEGFRNT…PDNCSQDSAL (71 aa)) the chain is Cytoplasmic.

The protein belongs to the G-protein coupled receptor 1 family.

It is found in the cell membrane. Receptor for lysophosphatidic acid (LPA), a mediator of diverse cellular activities. In Mus musculus (Mouse), this protein is Lysophosphatidic acid receptor 5 (Lpar5).